The primary structure comprises 314 residues: MSGKPAPAHRAVLLEEAVEALAVRPDGIYLDGTFGRGGHSGRILERLGPDGRLIALDRDPEAEAEAARRFGDDERFHFERCSFEMLQQVTDRLGISGRLDGVLLDLGVSSPQLDTPERGFSFMSDGPLDMRMDPESGESAAAWLARANEDEIAWVLKEYGEERFARRIARRIVETRQEMPLERTRQLAELIAEAVPFKERHKHPATRSFQAIRIRVNDELETLPRCLEQIPALLAPGGRLAVISFHSLEDRMVKRFLRDQAEGERLPRGLPVQGDARRGQTLRLVGRAIRAGEAELDQNPRARSAVLRVAERLA.

S-adenosyl-L-methionine-binding positions include Gly37–His39, Asp57, Phe83, Asp105, and Gln112.

This sequence belongs to the methyltransferase superfamily. RsmH family.

The protein localises to the cytoplasm. It carries out the reaction cytidine(1402) in 16S rRNA + S-adenosyl-L-methionine = N(4)-methylcytidine(1402) in 16S rRNA + S-adenosyl-L-homocysteine + H(+). Functionally, specifically methylates the N4 position of cytidine in position 1402 (C1402) of 16S rRNA. In Thioalkalivibrio sulfidiphilus (strain HL-EbGR7), this protein is Ribosomal RNA small subunit methyltransferase H.